The primary structure comprises 141 residues: Ribosome-binding factor A (141 aa).

The tract at residues 120–141 is disordered; sequence SPHVQRDLQENDDQEDDSEGSL. Over residues 129–141 the composition is skewed to acidic residues; that stretch reads ENDDQEDDSEGSL.

This sequence belongs to the RbfA family. Monomer. Binds 30S ribosomal subunits, but not 50S ribosomal subunits or 70S ribosomes.

Its subcellular location is the cytoplasm. Its function is as follows. One of several proteins that assist in the late maturation steps of the functional core of the 30S ribosomal subunit. Associates with free 30S ribosomal subunits (but not with 30S subunits that are part of 70S ribosomes or polysomes). Required for efficient processing of 16S rRNA. May interact with the 5'-terminal helix region of 16S rRNA. The polypeptide is Ribosome-binding factor A (Zymomonas mobilis subsp. mobilis (strain ATCC 31821 / ZM4 / CP4)).